We begin with the raw amino-acid sequence, 81 residues long: Small ribosomal subunit protein bS18 (81 aa).

It belongs to the bacterial ribosomal protein bS18 family. As to quaternary structure, part of the 30S ribosomal subunit. Forms a tight heterodimer with protein bS6.

In terms of biological role, binds as a heterodimer with protein bS6 to the central domain of the 16S rRNA, where it helps stabilize the platform of the 30S subunit. The sequence is that of Small ribosomal subunit protein bS18 from Leptospira borgpetersenii serovar Hardjo-bovis (strain JB197).